Here is a 1212-residue protein sequence, read N- to C-terminus: MASIQTKLVSQPQTQQPLQNGFFNNYQQNIYRPQGIQSPPQQTPPSQPQQQPILPQQPQPQSQQPLHLQQQQQQQQQQQLLQQQQILQQQQQLLQLQQQQQNLIKQQQHQAQQQNFLHPQAQQVQSQLQLQSQPQPQPQPVNNVNNNNNNNNNNNNNNNNNNNKPFGTNNIHYSLVQQQQLLQQQAQQQLLQQQQHQQLLLQQQQAQQQSSLNNSLNSSGNNSTLNTSNNNNNVLLGANFNNASNPSINIGDPQLNNSNTNNVNNINTNNTNNNNKSGSIDQFGSPQIGVSYVNSSSNSAIPTPPTNQTNGSNSHSPTPVGINSNININSNLQSPQNIQQTILSPNISPNHNNNNNNNNNNNNNNNNNNNNNNKVSEELNEQLRMQQQQRQQQQQQIPQQPMQLLLQQQQQQQAQLQQQQAQLQQQQQAQLQQQQQAQLQQQQQAQQQAQQQAQQQQQQLKIYQQHFGQLQHQIHMLQQQPQNPQTQQQINGLLQQQAQIQQQQAIIIQQMQQMQQNQQIQQNQQLPQQQQQQQQQQQQQQQQAQQLLLQQQLQQQQQQQQQQQLQQAQQAQQQQQQQQQQQAQQQQQQQAQQQQQQQQQQQQQQQQQQQQQQQQQQQQQQQQQQQQQQQQQQQAQQQPQAQQSQQQAQQQQQNQQQPQQLNQNPPNQQLPQQPNQITQQQQQQQHQTNQILQNQQSQQILQLQQLQQQQQQQQQQQQQQQQQQQQQQQQLQQQQQQQQQQQQQQQQQQRQQPNQVQPNQPIDYNKKLELLNHPIWGKVLKETRQQIVLVYELLRMRCEGPHIKRNLFYQGIGLAPFSLSLPILSPSGLINATTGKPILKCTGSATSLYIVEDNNLFFQHNCGEQLVISKLFGAKVVPISTYESFLDHIVNILFNLTLLSPDELNLCTNRKNQPTFPLYQLDNKLSLVNQVQNQNQNQNNNNNNNNNNNNNINCNNANGTNIVISEVKNDINQLQPQQPPPQQQQAIPFVPSPTNDGNSVNNNINNNFINNNSFVNNNNNNNIQPTKSIIGVSNPFQNNNNNNNNNNNNNNNNNNNNNNNNNNNNNNNNNNNNNNNNNTNNNINNNINNQQQLYIQQQQYSQQQQQQQQNPQQQNPQQQNPQQLQQQQHLQQLQQQLLQQQLLQQQQQQQQQQQQQQQMQQQIQQPPQQNIEPINQLSDNQINMQQFNMLNNTNGNFNINNTNNLVRSSVQY.

Over residues 1 to 31 (MASIQTKLVSQPQTQQPLQNGFFNNYQQNIY) the composition is skewed to polar residues. 7 disordered regions span residues 1 to 70 (MASI…HLQQ), 119 to 169 (PQAQ…FGTN), 211 to 231 (SLNN…SNNN), 248 to 374 (INIG…NNNK), 655 to 681 (QQQP…TQQQ), 935 to 957 (NQNQ…CNNA), and 973 to 1125 (QLQP…QQLQ). 2 stretches are compositionally biased toward low complexity: residues 48-70 (PQQQ…HLQQ) and 119-163 (PQAQ…NNNN). Residues 256–275 (NNSNTNNVNNINTNNTNNNN) are compositionally biased toward low complexity. Composition is skewed to polar residues over residues 276 to 285 (KSGSIDQFGS) and 292 to 317 (YVNS…SHSP). Low complexity predominate over residues 322–340 (INSNININSNLQSPQNIQQ). Residues 341–351 (TILSPNISPNH) show a composition bias toward polar residues. Over residues 352–373 (NNNNNNNNNNNNNNNNNNNNNN) the composition is skewed to low complexity. 2 stretches are compositionally biased toward low complexity: residues 998-1022 (NSVN…NNNN) and 1037-1125 (QNNN…QQLQ).

This is an uncharacterized protein from Dictyostelium discoideum (Social amoeba).